The chain runs to 62 residues: UPF0434 protein ASA_1553 (62 aa).

Belongs to the UPF0434 family.

The sequence is that of UPF0434 protein ASA_1553 from Aeromonas salmonicida (strain A449).